The chain runs to 1171 residues: Structural maintenance of chromosomes protein 2-2 (1171 aa).

A Zinc-hook domain is found at 2-1158; sequence HIKEICLEGF…DVLFRTKFVD (1157 aa). 32–39 is a binding site for ATP; it reads GLNGSGKS. The stretch at 172 to 510 forms a coiled coil; the sequence is RMYENKKEAA…LANVQFTYRD (339 aa). An SMC hinge domain is found at 518-635; it reads SKVKGVVAKL…KTTDAAKEVA (118 aa). Residues 674-1026 adopt a coiled-coil conformation; that stretch reads HDLAEAETKF…LDEKKKETLK (353 aa).

It belongs to the SMC family. SMC2 subfamily. In terms of assembly, forms a heterodimer with SMC4. Component of the condensin complex, which contains the SMC2 and SMC4 heterodimer, and three non SMC subunits that probably regulate the complex: CAPH, CAPD2 and CAPG. In terms of tissue distribution, highly expressed in roots and young floral buds.

The protein resides in the nucleus. Central component of the condensin complex, a complex required for conversion of interphase chromatin into mitotic-like condense chromosomes. The condensin complex probably introduces positive supercoils into relaxed DNA in the presence of type I topoisomerases and converts nicked DNA into positive knotted forms in the presence of type II topoisomerases. Also involved in chromosome segregation in meiosis. This Arabidopsis thaliana (Mouse-ear cress) protein is Structural maintenance of chromosomes protein 2-2 (SMC2-2).